The primary structure comprises 160 residues: Phosphopantetheine adenylyltransferase (160 aa).

Serine 10 contributes to the substrate binding site. ATP-binding positions include 10-11 (SF) and histidine 18. Substrate-binding residues include lysine 42, threonine 74, and arginine 88. Residues 89-91 (GLR), glutamate 99, and 124-130 (YSFVSST) each bind ATP.

Belongs to the bacterial CoaD family. As to quaternary structure, homohexamer. Mg(2+) is required as a cofactor.

The protein resides in the cytoplasm. The enzyme catalyses (R)-4'-phosphopantetheine + ATP + H(+) = 3'-dephospho-CoA + diphosphate. It functions in the pathway cofactor biosynthesis; coenzyme A biosynthesis; CoA from (R)-pantothenate: step 4/5. Reversibly transfers an adenylyl group from ATP to 4'-phosphopantetheine, yielding dephospho-CoA (dPCoA) and pyrophosphate. The polypeptide is Phosphopantetheine adenylyltransferase (Leptospira biflexa serovar Patoc (strain Patoc 1 / Ames)).